The primary structure comprises 650 residues: 1-deoxy-D-xylulose-5-phosphate synthase (650 aa).

Basic and acidic residues predominate over residues 1–13; that stretch reads MSKIKNDKRETGH. Residues 1–23 are disordered; it reads MSKIKNDKRETGHLKSPPETPLL. Residues H92 and 133–135 contribute to the thiamine diphosphate site; that span reads AHS. D164 is a Mg(2+) binding site. Thiamine diphosphate contacts are provided by residues 165-166, N193, Y302, and E384; that span reads GA. N193 serves as a coordination point for Mg(2+).

This sequence belongs to the transketolase family. DXPS subfamily. Homodimer. The cofactor is Mg(2+). It depends on thiamine diphosphate as a cofactor.

The enzyme catalyses D-glyceraldehyde 3-phosphate + pyruvate + H(+) = 1-deoxy-D-xylulose 5-phosphate + CO2. It functions in the pathway metabolic intermediate biosynthesis; 1-deoxy-D-xylulose 5-phosphate biosynthesis; 1-deoxy-D-xylulose 5-phosphate from D-glyceraldehyde 3-phosphate and pyruvate: step 1/1. Catalyzes the acyloin condensation reaction between C atoms 2 and 3 of pyruvate and glyceraldehyde 3-phosphate to yield 1-deoxy-D-xylulose-5-phosphate (DXP). The chain is 1-deoxy-D-xylulose-5-phosphate synthase from Chelativorans sp. (strain BNC1).